The following is a 75-amino-acid chain: Exodeoxyribonuclease 7 small subunit (75 aa).

Belongs to the XseB family. Heterooligomer composed of large and small subunits.

It is found in the cytoplasm. The enzyme catalyses Exonucleolytic cleavage in either 5'- to 3'- or 3'- to 5'-direction to yield nucleoside 5'-phosphates.. Bidirectionally degrades single-stranded DNA into large acid-insoluble oligonucleotides, which are then degraded further into small acid-soluble oligonucleotides. In Listeria welshimeri serovar 6b (strain ATCC 35897 / DSM 20650 / CCUG 15529 / CIP 8149 / NCTC 11857 / SLCC 5334 / V8), this protein is Exodeoxyribonuclease 7 small subunit.